A 165-amino-acid chain; its full sequence is Myosin regulatory light chain 2B, cardiac muscle isoform (165 aa).

Ala2 carries the n,N,N-trimethylalanine modification. EF-hand domains lie at 23–58 (TQIQ…LGRL), 93–128 (DPEE…QEGR), and 129–164 (FSQE…GEEK). Residues Asp36, Asn38, Asp40, and Asp47 each coordinate Ca(2+).

Myosin is a hexamer of 2 heavy chains and 4 light chains. The N-terminus is blocked. N,N,N-trimethylalanine, found in other myosin light chains would not have been detected in the N-terminal tryptic peptide in PubMed:7319048 because it would remain trimethylated and ninhydrin negative after hydrolysis.

The polypeptide is Myosin regulatory light chain 2B, cardiac muscle isoform (Gallus gallus (Chicken)).